We begin with the raw amino-acid sequence, 94 residues long: PTS system galactitol-specific EIIB component (94 aa).

In terms of domain architecture, PTS EIIB type-2 spans 1–94 (MKRKIIVACG…QNKILTILQG (94 aa)). The active-site Phosphocysteine intermediate; for EIIB activity is the cysteine 9. Residue cysteine 9 is modified to Phosphocysteine; by EIIA.

In terms of assembly, forms a complex with one each of subunit of GatA, GatB and 2 subunits of GatC.

It localises to the cytoplasm. The enzyme catalyses galactitol(out) + N(pros)-phospho-L-histidyl-[protein] = galactitol 1-phosphate(in) + L-histidyl-[protein]. Its function is as follows. The phosphoenolpyruvate-dependent sugar phosphotransferase system (PTS), a major carbohydrate active transport system, catalyzes the phosphorylation of incoming sugar substrates concomitant with their translocation across the cell membrane. The enzyme II complex composed of GatA, GatB and GatC is involved in galactitol transport. It can also use D-glucitol. In Escherichia coli (strain K12), this protein is PTS system galactitol-specific EIIB component.